We begin with the raw amino-acid sequence, 152 residues long: Small ribosomal subunit protein uS11 (152 aa).

Positions 133-152 (VTPIPTDSTRRKSGHRGRRL) are disordered. Basic residues predominate over residues 143 to 152 (RKSGHRGRRL).

This sequence belongs to the universal ribosomal protein uS11 family. In terms of assembly, component of the small ribosomal subunit. Part of the small subunit (SSU) processome, composed of more than 70 proteins and the RNA chaperone small nucleolar RNA (snoRNA) U3.

It localises to the cytoplasm. The protein localises to the nucleus. Its subcellular location is the nucleolus. Its function is as follows. Component of the small ribosomal subunit. The ribosome is a large ribonucleoprotein complex responsible for the synthesis of proteins in the cell. Part of the small subunit (SSU) processome, first precursor of the small eukaryotic ribosomal subunit. During the assembly of the SSU processome in the nucleolus, many ribosome biogenesis factors, an RNA chaperone and ribosomal proteins associate with the nascent pre-rRNA and work in concert to generate RNA folding, modifications, rearrangements and cleavage as well as targeted degradation of pre-ribosomal RNA by the RNA exosome. This Dictyostelium discoideum (Social amoeba) protein is Small ribosomal subunit protein uS11 (rps14).